The sequence spans 182 residues: Hypoxanthine/guanine phosphoribosyltransferase (182 aa).

Belongs to the purine/pyrimidine phosphoribosyltransferase family. Archaeal HPRT subfamily. As to quaternary structure, homodimer.

It is found in the cytoplasm. It carries out the reaction IMP + diphosphate = hypoxanthine + 5-phospho-alpha-D-ribose 1-diphosphate. The enzyme catalyses GMP + diphosphate = guanine + 5-phospho-alpha-D-ribose 1-diphosphate. The protein operates within purine metabolism; IMP biosynthesis via salvage pathway; IMP from hypoxanthine: step 1/1. In terms of biological role, catalyzes a salvage reaction resulting in the formation of IMP that is energically less costly than de novo synthesis. This chain is Hypoxanthine/guanine phosphoribosyltransferase, found in Methanospirillum hungatei JF-1 (strain ATCC 27890 / DSM 864 / NBRC 100397 / JF-1).